We begin with the raw amino-acid sequence, 121 residues long: uncharacterized protein (121 aa).

A compositionally biased stretch (low complexity) spans 12 to 24 (EEGGASAAAPDAS). 2 disordered regions span residues 12–63 (EEGG…RLEP) and 101–121 (KKLA…SPVV). The segment covering 26–35 (KSKKGARPCF) has biased composition (basic residues). Positions 40-49 (QAGSCMTGRQ) are enriched in polar residues. The span at 112–121 (GSQKERSPVV) shows a compositional bias: basic and acidic residues.

This is an uncharacterized protein from Homo sapiens (Human).